The sequence spans 207 residues: Uracil phosphoribosyltransferase (207 aa).

Residues R77, R102, and 129 to 137 (DPMLATGGS) contribute to the 5-phospho-alpha-D-ribose 1-diphosphate site. Uracil-binding positions include I192 and 197-199 (GDA). D198 is a binding site for 5-phospho-alpha-D-ribose 1-diphosphate.

This sequence belongs to the UPRTase family. It depends on Mg(2+) as a cofactor.

It carries out the reaction UMP + diphosphate = 5-phospho-alpha-D-ribose 1-diphosphate + uracil. The protein operates within pyrimidine metabolism; UMP biosynthesis via salvage pathway; UMP from uracil: step 1/1. With respect to regulation, allosterically activated by GTP. Catalyzes the conversion of uracil and 5-phospho-alpha-D-ribose 1-diphosphate (PRPP) to UMP and diphosphate. The protein is Uracil phosphoribosyltransferase of Mycobacterium marinum (strain ATCC BAA-535 / M).